The chain runs to 151 residues: Superoxide dismutase [Cu-Zn] A (151 aa).

Residue Cys-6 is the site of S-palmitoyl cysteine attachment. Cu cation-binding residues include His-45, His-47, and His-62. Cys-56 and Cys-144 form a disulfide bridge. His-62, His-70, His-79, and Asp-82 together coordinate Zn(2+). Cu cation is bound at residue His-118.

Belongs to the Cu-Zn superoxide dismutase family. Homodimer, and heterodimer of Superoxide dismutase [Cu-Zn] A and B. It depends on Cu cation as a cofactor. Zn(2+) serves as cofactor.

It is found in the cytoplasm. The protein localises to the nucleus. The catalysed reaction is 2 superoxide + 2 H(+) = H2O2 + O2. In terms of biological role, destroys radicals which are normally produced within the cells and which are toxic to biological systems. In Xenopus laevis (African clawed frog), this protein is Superoxide dismutase [Cu-Zn] A (sod1-a).